We begin with the raw amino-acid sequence, 517 residues long: UDP-N-acetylmuramyl-tripeptide synthetase (517 aa).

A UDP-N-acetyl-alpha-D-muramoyl-L-alanyl-D-glutamate-binding site is contributed by Thr48. Residue 125–131 (GTKGKTT) participates in ATP binding. UDP-N-acetyl-alpha-D-muramoyl-L-alanyl-D-glutamate-binding positions include 169–170 (TT), Ser196, and Arg204. An N6-carboxylysine modification is found at Lys238.

The protein belongs to the MurCDEF family. MurE subfamily. Post-translationally, carboxylation is probably crucial for Mg(2+) binding and, consequently, for the gamma-phosphate positioning of ATP.

Its subcellular location is the cytoplasm. It participates in cell wall biogenesis; peptidoglycan biosynthesis. Functionally, catalyzes the addition of an amino acid to the nucleotide precursor UDP-N-acetylmuramoyl-L-alanyl-D-glutamate (UMAG) in the biosynthesis of bacterial cell-wall peptidoglycan. This chain is UDP-N-acetylmuramyl-tripeptide synthetase, found in Bifidobacterium longum (strain NCC 2705).